A 200-amino-acid chain; its full sequence is Transcriptional repressor NrdR (200 aa).

A zinc finger lies at 3–34 (CPRCGKQEIRVLESRSAEGGQSVRRRRECMSC). In terms of domain architecture, ATP-cone spans 49-139 (IMVIKRDGSR…VYRKFQGIKD (91 aa)). The tract at residues 158-200 (LERPLRNSPPSESESTASPDWVGGIPQLLDQNDTSSNLSEIPK) is disordered. Positions 186–200 (LDQNDTSSNLSEIPK) are enriched in polar residues.

The protein belongs to the NrdR family. Requires Zn(2+) as cofactor.

Functionally, negatively regulates transcription of bacterial ribonucleotide reductase nrd genes and operons by binding to NrdR-boxes. This Synechococcus sp. (strain JA-3-3Ab) (Cyanobacteria bacterium Yellowstone A-Prime) protein is Transcriptional repressor NrdR.